A 322-amino-acid chain; its full sequence is Acetylglutamate kinase (322 aa).

Substrate contacts are provided by residues 89 to 90, Arg-111, and Asn-217; that span reads GG.

It belongs to the acetylglutamate kinase family. ArgB subfamily.

It localises to the cytoplasm. The enzyme catalyses N-acetyl-L-glutamate + ATP = N-acetyl-L-glutamyl 5-phosphate + ADP. It participates in amino-acid biosynthesis; L-arginine biosynthesis; N(2)-acetyl-L-ornithine from L-glutamate: step 2/4. Functionally, catalyzes the ATP-dependent phosphorylation of N-acetyl-L-glutamate. This is Acetylglutamate kinase from Ehrlichia ruminantium (strain Welgevonden).